A 217-amino-acid chain; its full sequence is Coiled-coil domain-containing protein 124-A (217 aa).

The disordered stretch occupies residues 1-128; it reads MPKKFQGENT…HLEMPLEENV (128 aa). Basic and acidic residues-rich tracts occupy residues 18–45, 52–74, and 95–128; these read RKAEAKAVSDGKRQKEIEDAYWQDDDKH, RKEDKEKKRLEQLERKKESQRLL, and TRAEIEETLCKEEEHKATTEKPKTHLEMPLEENV. Residues 46 to 82 adopt a coiled-coil conformation; the sequence is VARKGQRKEDKEKKRLEQLERKKESQRLLDEEDSKMK.

It belongs to the CCDC124 family. Associates with translationally inactive ribosomes in the nonrotated state.

It is found in the cytoplasm. The protein localises to the cytoskeleton. The protein resides in the microtubule organizing center. Its subcellular location is the centrosome. It localises to the midbody. Ribosome-binding protein involved in ribosome hibernation: associates with translationally inactive ribosomes and stabilizes the nonrotated conformation of the 80S ribosome, thereby promoting ribosome preservation and storage. The protein is Coiled-coil domain-containing protein 124-A (ccdc124-a) of Xenopus laevis (African clawed frog).